Here is a 400-residue protein sequence, read N- to C-terminus: Enoyl-[acyl-carrier-protein] reductase [NADH] (400 aa).

NAD(+)-binding positions include 48–53 (GSSSGY), 74–75 (FE), 111–112 (DA), and 139–140 (LA). Position 225 (Y225) interacts with substrate. Residue Y235 is the Proton donor of the active site. Residues K244 and 273 to 275 (VVT) contribute to the NAD(+) site.

This sequence belongs to the TER reductase family. Monomer.

It catalyses the reaction a 2,3-saturated acyl-[ACP] + NAD(+) = a (2E)-enoyl-[ACP] + NADH + H(+). It functions in the pathway lipid metabolism; fatty acid biosynthesis. Functionally, involved in the final reduction of the elongation cycle of fatty acid synthesis (FAS II). Catalyzes the reduction of a carbon-carbon double bond in an enoyl moiety that is covalently linked to an acyl carrier protein (ACP). The protein is Enoyl-[acyl-carrier-protein] reductase [NADH] of Shewanella pealeana (strain ATCC 700345 / ANG-SQ1).